The sequence spans 490 residues: Katanin p60 ATPase-containing subunit A-like 1 (490 aa).

The residue at position 1 (Met1) is an N-acetylmethionine. The disordered stretch occupies residues 95-178; it reads DPAVWPPPVP…MQDGASDGDI (84 aa). Basic and acidic residues predominate over residues 116–127; sequence PNREVRPLRKDV. Positions 128–139 are enriched in low complexity; the sequence is AGVGARGPVGRA. Basic and acidic residues predominate over residues 143 to 169; it reads SKSEKPSTNKDKDYRARGRDDKGRKNM. Phosphoserine is present on Ser174. Position 248–255 (248–255) interacts with ATP; that stretch reads GPPGTGKT.

This sequence belongs to the AAA ATPase family. Katanin p60 subunit A1 subfamily. A-like 1 sub-subfamily. In terms of assembly, interacts with KATNB1 and KATNBL1.

It is found in the cytoplasm. Its subcellular location is the cytoskeleton. The protein localises to the spindle pole. It localises to the spindle. The enzyme catalyses n ATP + n H2O + a microtubule = n ADP + n phosphate + (n+1) alpha/beta tubulin heterodimers.. Its function is as follows. Regulates microtubule dynamics in Sertoli cells, a process that is essential for spermiogenesis and male fertility. Severs microtubules in an ATP-dependent manner, promoting rapid reorganization of cellular microtubule arrays. Has microtubule-severing activity in vitro. This is Katanin p60 ATPase-containing subunit A-like 1 from Sorex araneus (Eurasian common shrew).